Here is a 191-residue protein sequence, read N- to C-terminus: PBAN-type neuropeptides (191 aa).

The first 17 residues, 1–17, serve as a signal peptide directing secretion; the sequence is MFSPLLFFAVSISCVLA. A Leucine amide modification is found at leucine 44. Residues 48-91 constitute a propeptide that is removed on maturation; sequence SLRISTEDNRQAFFKLLEAADALKYYYDRLPYEMQADEPETRVT. Residues leucine 100, leucine 120, leucine 156, and leucine 166 each carry the leucine amide modification. A propeptide spanning residues 169–191 is cleaved from the precursor; the sequence is ELSYDMLPSKLRLVRSTNRTQST.

Belongs to the pyrokinin family. Expressed in the subesophageal ganglion.

The protein resides in the secreted. A hormone that controls sex pheromone production in females and pheromone responsiveness in male. In Spodoptera littoralis (Egyptian cotton leafworm), this protein is PBAN-type neuropeptides.